A 336-amino-acid polypeptide reads, in one-letter code: tRNA N6-adenosine threonylcarbamoyltransferase (336 aa).

Residues His114 and His118 each contribute to the Fe cation site. Substrate contacts are provided by residues 136-140, Asp169, Gly182, Asp186, and Asn275; that span reads LVSGG. Asp301 is a binding site for Fe cation.

It belongs to the KAE1 / TsaD family. It depends on Fe(2+) as a cofactor.

The protein resides in the cytoplasm. It carries out the reaction L-threonylcarbamoyladenylate + adenosine(37) in tRNA = N(6)-L-threonylcarbamoyladenosine(37) in tRNA + AMP + H(+). Functionally, required for the formation of a threonylcarbamoyl group on adenosine at position 37 (t(6)A37) in tRNAs that read codons beginning with adenine. Is involved in the transfer of the threonylcarbamoyl moiety of threonylcarbamoyl-AMP (TC-AMP) to the N6 group of A37, together with TsaE and TsaB. TsaD likely plays a direct catalytic role in this reaction. The protein is tRNA N6-adenosine threonylcarbamoyltransferase of Streptococcus pneumoniae (strain CGSP14).